Reading from the N-terminus, the 600-residue chain is MTGTSFYTSVLRLGRLAQQGLKFQSVKHIRPSCFSSFGLQAKRWNSTQQNDSSIDCLEPKLQGIIEDNISPSTAQKEISDIKFNIPKEMLLPDGTPDYLRLTLTSNVYEVIKETPLTKGVVISESTGVPVYLKREDLTPVFSFKIRGAHNKMASLDKQSLKNGVIACSAGNHAQGVAYSARTLGVKATIVMPQNTPEIKWRNVKRLGANVLLHGANFDIAKAECARLAKEQNLEVIHPFDDPYVIAGQGTIGLEILHQIDLRKLDAIYCAVGGGGLIAGIATYVKRIAPHVKVIGVETFDADALKKSLKDKKRVTLKEVGLFADGTAVKLVGEETFRLVSKNIDDVVLVDKDEICAAIKDVFLDTRSVVEPSGAMAVAGMKRYVAKHKPKNPNAAQVCILSGANMDFDRLRFIAERADLGLNKEVFLSVTIPERPGSFEALHNIITPRSITEFSYRYDNDDYANIYTSFVVKDRATELPLILQQISEQNMVAEDISDNELAKTHARYLIGGKSSVSKERLYRLDFPERPGALCKFLRSIKEVCSISLFHYRNCGGDIASVLAGLRVFDGQVEKLHSVLEEIGYNWVDETNNPVYLRYLRK.

The residue at position 144 (Lys-144) is an N6-(pyridoxal phosphate)lysine. 2 ACT-like domains span residues 425–497 and 519–590; these read VFLS…DISD and RLYR…DETN.

This sequence belongs to the serine/threonine dehydratase family. In terms of assembly, homotetramer. Pyridoxal 5'-phosphate is required as a cofactor.

Its subcellular location is the mitochondrion. The protein localises to the cytoplasm. The catalysed reaction is L-threonine = 2-oxobutanoate + NH4(+). Its pathway is amino-acid biosynthesis; L-isoleucine biosynthesis; 2-oxobutanoate from L-threonine: step 1/1. Isoleucine allosterically inhibits while valine allosterically activates this enzyme. The chain is Threonine dehydratase, mitochondrial from Schizosaccharomyces pombe (strain 972 / ATCC 24843) (Fission yeast).